The sequence spans 877 residues: MKKRIDYLSNKQNKYSIRRFTVGTTSVIVGATILFGIGNHQAQASEQSNDTTQSSKNNASADSEKNNMIETPQLNTTANDTSDISANTNSANVDSTTKPMSTQTSNTTTTEPASTNETPQPTAIKNQATAAKMQDQTVPQEANSQVDNKTTNDANSIATNSELKNSQTLDLPQSSPQTISNAQGTSKPSVRTRAVRSLAVAEPVVNAADAKGTNVNDKVTASNFKLEKTTFDPNQSGNTFMAANFTVTDKVKSGDYFTAKLPDSLTGNGDVDYSNSNNTMPIADIKSTNGDVVAKATYDILTKTYTFVFTDYVNNKENINGQFSLPLFTDRAKAPKSGTYDANINIADEMFNNKITYNYSSPIAGIDKPNGANISSQIIGVDTASGQNTYKQTVFVNPKQRVLGNTWVYIKGYQDKIEESSGKVSATDTKLRIFEVNDTSKLSDSYYADPNDSNLKEVTDQFKNRIYYEHPNVASIKFGDITKTYVVLVEGHYDNTGKNLKTQVIQENVDPVTNRDYSIFGWNNENVVRYGGGSADGDSAVNPKDPTPGPPVDPEPSPDPEPEPTPDPEPSPDPEPEPSPDPDPDSDSDSDSGSDSDSGSDSDSESDSDSDSDSDSDSDSDSESDSDSESDSDSDSDSDSDSDSDSESDSDSDSDSDSDSDSDSESDSDSESDSESDSDSDSDSDSDSDSDSDSDSDSDSDSDSDSDSDSDSESDSDSDSDSDSDSDSDSDSDSDSDSDSDSDSDSDSDSDSDSDSDSDSDSDSDSDSDSDSDSDSDSDSDSDSDSDSDSDSDSDSDSDSDSDSRVTPPNNEQKAPSNPKGEVNHSNKVSKQHKTDALPETGDKSENTNATLFGAMMALLGSLLLFRKRKQDHKEKA.

Residues 1 to 44 (MKKRIDYLSNKQNKYSIRRFTVGTTSVIVGATILFGIGNHQAQA) form the signal peptide. The short motif at 15 to 26 (YSIRRFTVGTTS) is the YSIRK-G/S signaling motif element. Polar residues-rich tracts occupy residues 44-61 (ASEQ…NASA) and 68-95 (MIET…NVDS). The segment at 44-192 (ASEQSNDTTQ…QGTSKPSVRT (149 aa)) is disordered. The interval 45-542 (SEQSNDTTQS…GSADGDSAVN (498 aa)) is ligand binding A region. The segment covering 96–119 (TTKPMSTQTSNTTTTEPASTNETP) has biased composition (low complexity). Residues 120 to 189 (QPTAIKNQAT…SNAQGTSKPS (70 aa)) are compositionally biased toward polar residues. The MIDAS-like motif motif lies at 272 to 276 (DYSNS). Residues 530–849 (YGGGSADGDS…ETGDKSENTN (320 aa)) are disordered. Over residues 545-555 (DPTPGPPVDPE) the composition is skewed to pro residues. Positions 556-801 (PSPDPEPEPT…SDSDSDSDSD (246 aa)) are enriched in acidic residues. Residues 805 to 816 (RVTPPNNEQKAP) show a composition bias toward polar residues. The segment covering 833–846 (HKTDALPETGDKSE) has biased composition (basic and acidic residues). Residues 838-842 (LPETG) carry the LPXTG sorting signal motif. A Pentaglycyl murein peptidoglycan amidated threonine modification is found at Thr-841. The propeptide at 842–877 (GDKSENTNATLFGAMMALLGSLLLFRKRKQDHKEKA) is removed by sortase.

Belongs to the serine-aspartate repeat-containing protein (SDr) family. Post-translationally, proteolytically cleaved by aureolysin (aur). This cleavage leads to the inactivation of ClfB.

It localises to the secreted. It is found in the cell wall. Functionally, cell surface-associated protein implicated in virulence by promoting bacterial attachment to both alpha- and beta-chains of human fibrinogen and inducing the formation of bacterial clumps. This chain is Clumping factor B (clfB), found in Staphylococcus aureus (strain Mu50 / ATCC 700699).